The chain runs to 251 residues: Imidazole glycerol phosphate synthase subunit HisF (251 aa).

Residues Asp-11 and Asp-130 contribute to the active site.

It belongs to the HisA/HisF family. In terms of assembly, heterodimer of HisH and HisF.

It localises to the cytoplasm. The catalysed reaction is 5-[(5-phospho-1-deoxy-D-ribulos-1-ylimino)methylamino]-1-(5-phospho-beta-D-ribosyl)imidazole-4-carboxamide + L-glutamine = D-erythro-1-(imidazol-4-yl)glycerol 3-phosphate + 5-amino-1-(5-phospho-beta-D-ribosyl)imidazole-4-carboxamide + L-glutamate + H(+). It participates in amino-acid biosynthesis; L-histidine biosynthesis; L-histidine from 5-phospho-alpha-D-ribose 1-diphosphate: step 5/9. In terms of biological role, IGPS catalyzes the conversion of PRFAR and glutamine to IGP, AICAR and glutamate. The HisF subunit catalyzes the cyclization activity that produces IGP and AICAR from PRFAR using the ammonia provided by the HisH subunit. The protein is Imidazole glycerol phosphate synthase subunit HisF of Chlorobium phaeobacteroides (strain DSM 266 / SMG 266 / 2430).